We begin with the raw amino-acid sequence, 312 residues long: Protoheme IX farnesyltransferase (312 aa).

Helical transmembrane passes span 34–54 (LVIF…HPVL), 56–76 (ITSL…NMAL), 119–139 (ILVN…YVVI), 152–172 (IVIG…AATG), 179–199 (LLLF…LALF), 225–245 (ILLY…LGYF), 248–268 (VYGV…IEVF), and 283–303 (LFAF…LEAV).

It belongs to the UbiA prenyltransferase family. Protoheme IX farnesyltransferase subfamily.

The protein resides in the cell inner membrane. The catalysed reaction is heme b + (2E,6E)-farnesyl diphosphate + H2O = Fe(II)-heme o + diphosphate. Its pathway is porphyrin-containing compound metabolism; heme O biosynthesis; heme O from protoheme: step 1/1. In terms of biological role, converts heme B (protoheme IX) to heme O by substitution of the vinyl group on carbon 2 of heme B porphyrin ring with a hydroxyethyl farnesyl side group. In Bradyrhizobium sp. (strain BTAi1 / ATCC BAA-1182), this protein is Protoheme IX farnesyltransferase.